The primary structure comprises 336 residues: 3-isopropylmalate dehydrogenase (336 aa).

Substrate-binding residues include Arg-87, Arg-97, Arg-121, and Asp-211. Residues Asp-211, Asp-235, and Asp-239 each coordinate Mg(2+). Residue 271–283 (GSAPDIAGQGIAD) coordinates NAD(+).

Belongs to the isocitrate and isopropylmalate dehydrogenases family. LeuB type 2 subfamily. Homodimer. The cofactor is Mg(2+). Mn(2+) is required as a cofactor.

The protein resides in the cytoplasm. It carries out the reaction (2R,3S)-3-isopropylmalate + NAD(+) = 4-methyl-2-oxopentanoate + CO2 + NADH. The protein operates within amino-acid biosynthesis; L-leucine biosynthesis; L-leucine from 3-methyl-2-oxobutanoate: step 3/4. In terms of biological role, catalyzes the oxidation of 3-carboxy-2-hydroxy-4-methylpentanoate (3-isopropylmalate) to 3-carboxy-4-methyl-2-oxopentanoate. The product decarboxylates to 4-methyl-2 oxopentanoate. This is 3-isopropylmalate dehydrogenase from Mycolicibacterium paratuberculosis (strain ATCC BAA-968 / K-10) (Mycobacterium paratuberculosis).